Reading from the N-terminus, the 361-residue chain is MKDSIKAKLQSLIERHEEVSALLSEAGIISDQNKFRDLSKEYSHLEPIVKAFKKYTQALEDKQAAYEMLNEKDAELVEMAKEELKLANEAIEKLESELQIFLLPRDPNDDANVFLEIRAGTGGDEASIFSGDLFKMYSKYAEQRGWKIEVISASEGEHGGYKEIISRIYGDGVYSQLKFESGAHRVQRVPATESQGRIHTSACTVAVMPEADEVEGIDINPADIKVDTFRASGAGGQHVNKTDSAIRITHIPTGVVVECQDQRSQHKNRAAAMSMLKSKLLQAEIDKQQKEQSDTRKSLVGSGDRSERIRTYNYPQGRVTDHRINLTLYKLDEVMEGSLDSIIQPLVLEHQADLLATMSDE.

Gln237 carries the post-translational modification N5-methylglutamine. The span at Lys287–Lys297 shows a compositional bias: basic and acidic residues. The segment at Lys287–Asn313 is disordered.

The protein belongs to the prokaryotic/mitochondrial release factor family. In terms of processing, methylated by PrmC. Methylation increases the termination efficiency of RF1.

The protein localises to the cytoplasm. Peptide chain release factor 1 directs the termination of translation in response to the peptide chain termination codons UAG and UAA. This is Peptide chain release factor 1 from Francisella tularensis subsp. tularensis (strain FSC 198).